The primary structure comprises 199 residues: Transgelin-2 (199 aa).

N-acetylalanine is present on Ala2. Ser11 carries the post-translational modification Phosphoserine. An N6-acetyllysine mark is found at Lys17 and Lys20. A Calponin-homology (CH) domain is found at 24-136 (ADLEQILIQW…RTLMNLGGLA (113 aa)). A Phosphoserine modification is found at Ser163. Residue Lys171 forms a Glycyl lysine isopeptide (Lys-Gly) (interchain with G-Cter in SUMO2) linkage. The stretch at 174–199 (IGLQMGTNRGASQAGMTGYGMPRQIL) is one Calponin-like repeat. Position 180 is a phosphothreonine (Thr180). Residues Arg182 and Arg196 each carry the omega-N-methylarginine modification.

Belongs to the calponin family.

This chain is Transgelin-2 (TAGLN2), found in Bos taurus (Bovine).